A 461-amino-acid chain; its full sequence is ATP synthase subunit beta (461 aa).

151–158 provides a ligand contact to ATP; sequence GGAGVGKT.

Belongs to the ATPase alpha/beta chains family. In terms of assembly, F-type ATPases have 2 components, CF(1) - the catalytic core - and CF(0) - the membrane proton channel. CF(1) has five subunits: alpha(3), beta(3), gamma(1), delta(1), epsilon(1). CF(0) has three main subunits: a(1), b(2) and c(9-12). The alpha and beta chains form an alternating ring which encloses part of the gamma chain. CF(1) is attached to CF(0) by a central stalk formed by the gamma and epsilon chains, while a peripheral stalk is formed by the delta and b chains.

The protein localises to the cell inner membrane. It catalyses the reaction ATP + H2O + 4 H(+)(in) = ADP + phosphate + 5 H(+)(out). Functionally, produces ATP from ADP in the presence of a proton gradient across the membrane. The catalytic sites are hosted primarily by the beta subunits. The sequence is that of ATP synthase subunit beta from Coxiella burnetii (strain RSA 331 / Henzerling II).